The following is a 478-amino-acid chain: Protein nucleotidyltransferase YdiU (478 aa).

Positions 74, 76, 77, 97, 109, 110, 160, and 167 each coordinate ATP. Residue Asp-236 is the Proton acceptor of the active site. The Mg(2+) site is built by Asn-237 and Asp-246. Asp-246 contributes to the ATP binding site.

The protein belongs to the SELO family. Mg(2+) is required as a cofactor. Requires Mn(2+) as cofactor.

The enzyme catalyses L-seryl-[protein] + ATP = 3-O-(5'-adenylyl)-L-seryl-[protein] + diphosphate. It catalyses the reaction L-threonyl-[protein] + ATP = 3-O-(5'-adenylyl)-L-threonyl-[protein] + diphosphate. The catalysed reaction is L-tyrosyl-[protein] + ATP = O-(5'-adenylyl)-L-tyrosyl-[protein] + diphosphate. It carries out the reaction L-histidyl-[protein] + UTP = N(tele)-(5'-uridylyl)-L-histidyl-[protein] + diphosphate. The enzyme catalyses L-seryl-[protein] + UTP = O-(5'-uridylyl)-L-seryl-[protein] + diphosphate. It catalyses the reaction L-tyrosyl-[protein] + UTP = O-(5'-uridylyl)-L-tyrosyl-[protein] + diphosphate. Functionally, nucleotidyltransferase involved in the post-translational modification of proteins. It can catalyze the addition of adenosine monophosphate (AMP) or uridine monophosphate (UMP) to a protein, resulting in modifications known as AMPylation and UMPylation. The sequence is that of Protein nucleotidyltransferase YdiU from Chromobacterium violaceum (strain ATCC 12472 / DSM 30191 / JCM 1249 / CCUG 213 / NBRC 12614 / NCIMB 9131 / NCTC 9757 / MK).